The chain runs to 315 residues: Homoserine kinase (315 aa).

ATP is bound at residue Pro97 to Thr107.

Belongs to the GHMP kinase family. Homoserine kinase subfamily.

Its subcellular location is the cytoplasm. The enzyme catalyses L-homoserine + ATP = O-phospho-L-homoserine + ADP + H(+). It participates in amino-acid biosynthesis; L-threonine biosynthesis; L-threonine from L-aspartate: step 4/5. Catalyzes the ATP-dependent phosphorylation of L-homoserine to L-homoserine phosphate. In Prochlorococcus marinus (strain MIT 9312), this protein is Homoserine kinase.